Reading from the N-terminus, the 459-residue chain is Periodic tryptophan protein 1 homolog (459 aa).

The segment at 44–84 (GDTQQELDEESDDDAEEGENAEEDQNDMDVDDHADANSENR) is disordered. A compositionally biased stretch (acidic residues) spans 48–73 (QELDEESDDDAEEGENAEEDQNDMDV). A compositionally biased stretch (basic and acidic residues) spans 74-84 (DDHADANSENR). WD repeat units lie at residues 168–214 (LLPS…AIEP), 232–272 (GHKD…PHTT), 275–315 (AFGK…GVNS), 321–361 (KVDG…QLLW), and 365–405 (AHNE…AKHV). Position 385 is a phosphoserine (Ser-385).

The protein belongs to the WD repeat PWP1 family. In terms of assembly, interacts with Mybbp1A. In terms of processing, phosphorylated in response to nutrient-activated TORC1 signaling. In terms of tissue distribution, detected in the germline of adult testis and ovary (at protein level). Detected in ovary somatic cells, in zfh1-positive cyst cells in the testis and absent in differentiated cyst cells (at protein level).

The protein localises to the nucleus. It is found in the nucleolus. Its subcellular location is the chromosome. It localises to the nucleoplasm. Functionally, chromatin-associated factor that regulates transcription. Regulates Pol I-mediated rRNA biogenesis and, probably, Pol III-mediated transcription. Regulates the localization to the nucleolus of Cdk7, a regulator of the Pol I-elongation factor TFIIH. Acts as a regulator of cell proliferation and tissue growth as part of the TORC1 and Myc signaling pathway in response to nutrients. Required in males for both germline stem cell (GSC) maintenance and early stages of germ cell differentiation of germ cell cysts. Not required for female germline stem cell (GSC) maintenance, but necessary to regulate germ cell differentiation and egg chamber development. In female somatic cells, required for follicle stem cell survival and maintenance. The sequence is that of Periodic tryptophan protein 1 homolog from Drosophila melanogaster (Fruit fly).